A 212-amino-acid polypeptide reads, in one-letter code: Ribosomal RNA large subunit methyltransferase E (212 aa).

Residues Gly-57, Trp-59, Asp-77, Asp-93, and Asp-122 each contribute to the S-adenosyl-L-methionine site. Lys-162 serves as the catalytic Proton acceptor.

It belongs to the class I-like SAM-binding methyltransferase superfamily. RNA methyltransferase RlmE family.

Its subcellular location is the cytoplasm. The catalysed reaction is uridine(2552) in 23S rRNA + S-adenosyl-L-methionine = 2'-O-methyluridine(2552) in 23S rRNA + S-adenosyl-L-homocysteine + H(+). Specifically methylates the uridine in position 2552 of 23S rRNA at the 2'-O position of the ribose in the fully assembled 50S ribosomal subunit. This is Ribosomal RNA large subunit methyltransferase E from Coxiella burnetii (strain RSA 331 / Henzerling II).